Consider the following 348-residue polypeptide: Selenide, water dikinase (348 aa).

Cys-17 is an active-site residue. ATP is bound by residues Lys-20 and 47–49 (THD). Asp-50 is a Mg(2+) binding site. Residues Asp-67, Asp-90, and 138 to 140 (GHT) each bind ATP. Asp-90 serves as a coordination point for Mg(2+). A Mg(2+)-binding site is contributed by Asp-226.

The protein belongs to the selenophosphate synthase 1 family. Class I subfamily. In terms of assembly, homodimer. Requires Mg(2+) as cofactor.

It carries out the reaction hydrogenselenide + ATP + H2O = selenophosphate + AMP + phosphate + 2 H(+). Synthesizes selenophosphate from selenide and ATP. This is Selenide, water dikinase from Porphyromonas gingivalis (strain ATCC 33277 / DSM 20709 / CIP 103683 / JCM 12257 / NCTC 11834 / 2561).